The following is an 855-amino-acid chain: Alanine--tRNA ligase (855 aa).

The Zn(2+) site is built by H555, H559, C657, and H661.

The protein belongs to the class-II aminoacyl-tRNA synthetase family. Zn(2+) serves as cofactor.

The protein localises to the cytoplasm. The enzyme catalyses tRNA(Ala) + L-alanine + ATP = L-alanyl-tRNA(Ala) + AMP + diphosphate. Catalyzes the attachment of alanine to tRNA(Ala) in a two-step reaction: alanine is first activated by ATP to form Ala-AMP and then transferred to the acceptor end of tRNA(Ala). Also edits incorrectly charged Ser-tRNA(Ala) and Gly-tRNA(Ala) via its editing domain. This is Alanine--tRNA ligase from Wolinella succinogenes (strain ATCC 29543 / DSM 1740 / CCUG 13145 / JCM 31913 / LMG 7466 / NCTC 11488 / FDC 602W) (Vibrio succinogenes).